Consider the following 84-residue polypeptide: MALLRLFSGRKASAPVARERLQILLAHDRGLCGQPNLLGLLREEILAVVSRHVQLDPEKVVVRMDRGKSVSTLAVDIELPNGLA.

The protein belongs to the MinE family.

Its function is as follows. Prevents the cell division inhibition by proteins MinC and MinD at internal division sites while permitting inhibition at polar sites. This ensures cell division at the proper site by restricting the formation of a division septum at the midpoint of the long axis of the cell. The protein is Cell division topological specificity factor of Rhodopseudomonas palustris (strain BisA53).